We begin with the raw amino-acid sequence, 452 residues long: Peptidoglycan DL-endopeptidase CwlO (452 aa).

A signal peptide spans 1 to 30 (MKKKVYTFGLASILGTASLFTPFMNNTASA). A compositionally biased stretch (polar residues) spans 28–38 (ASAETSQQKQE). Disordered stretches follow at residues 28–53 (ASAE…IESK) and 258–317 (AAAA…GSVV). 2 stretches are compositionally biased toward basic and acidic residues: residues 39-53 (IQQK…IESK) and 263-275 (KAKE…EKSD). A compositionally biased stretch (low complexity) spans 276 to 317 (SGSSSSSNSGSVSKSDGSSNSGSSSSKKSSSPSRNYSSGSVV). Residues 321–450 (GNAIEAAIST…KAFNGVVRRV (130 aa)) form the NlpC/P60 domain. C358 acts as the Nucleophile in catalysis. H410 serves as the catalytic Proton acceptor. N422 is an active-site residue.

It belongs to the peptidase C40 family.

The protein localises to the secreted. In terms of biological role, shows a cell wall hydrolytic DL-endopeptidase activity. This chain is Peptidoglycan DL-endopeptidase CwlO (cwlO), found in Bacillus licheniformis (strain ATCC 14580 / DSM 13 / JCM 2505 / CCUG 7422 / NBRC 12200 / NCIMB 9375 / NCTC 10341 / NRRL NRS-1264 / Gibson 46).